A 957-amino-acid chain; its full sequence is Collagen alpha-1(XXI) chain (957 aa).

Residues 1 to 16 (MPGIIYILCSILLIES) form the signal peptide. A VWFA domain is found at 37-211 (DLVFILDGSW…RIREIMKQKL (175 aa)). Residues 230–412 (GFDILLGLGI…LQKLRIYCDP (183 aa)) form the Laminin G-like domain. 2 disordered regions span residues 441 to 788 (PAPC…GKEQ) and 820 to 935 (CKTQ…DAGI). Collagen-like domains follow at residues 448–501 (PGEK…PRGF), 502–543 (AGLK…DKGD), 544–591 (IGID…EEGK), 592–642 (PGPP…ISGP), 643–684 (EGIS…IPGQ), 685–741 (QGYT…EIGE), 742–786 (HGHR…QQGK), and 825–882 (GSPG…GNKG). Over residues 483–498 (TSGSPGIPGSPGVQGP) the composition is skewed to low complexity. Basic and acidic residues predominate over residues 535 to 556 (MGPKGDKGDIGIDGKKGTKGDK). Composition is skewed to low complexity over residues 597–616 (MEGL…DGAN) and 633–649 (PTGT…SGPQ). Residues 733 to 744 (KGEKGEIGEHGH) show a composition bias toward basic and acidic residues. Residues 775–786 (QGLPGPKGQQGK) show a composition bias toward low complexity.

It belongs to the fibril-associated collagens with interrupted helices (FACIT) family.

It is found in the secreted. The protein resides in the extracellular space. It localises to the extracellular matrix. The protein localises to the cytoplasm. This Xenopus laevis (African clawed frog) protein is Collagen alpha-1(XXI) chain (col21a1).